The following is a 219-amino-acid chain: Ribonuclease HII (219 aa).

The region spanning 10–219 (HLEAGTDEAG…LLPEQTVLDL (210 aa)) is the RNase H type-2 domain. A divalent metal cation is bound by residues aspartate 16, glutamate 17, and aspartate 108.

It belongs to the RNase HII family. Mn(2+) serves as cofactor. It depends on Mg(2+) as a cofactor.

The protein resides in the cytoplasm. The catalysed reaction is Endonucleolytic cleavage to 5'-phosphomonoester.. Functionally, endonuclease that specifically degrades the RNA of RNA-DNA hybrids. The chain is Ribonuclease HII from Flavobacterium psychrophilum (strain ATCC 49511 / DSM 21280 / CIP 103535 / JIP02/86).